The following is a 383-amino-acid chain: Dual-specificity RNA methyltransferase RlmN (383 aa).

The Proton acceptor role is filled by Glu-95. The region spanning 101–349 is the Radical SAM core domain; that stretch reads EETRGTLCVS…TTVRKTRGDD (249 aa). The cysteines at positions 108 and 354 are disulfide-linked. [4Fe-4S] cluster-binding residues include Cys-115, Cys-119, and Cys-122. Residues 180 to 181, Ser-212, 234 to 236, and Asn-311 each bind S-adenosyl-L-methionine; these read GE and SLH. Cys-354 acts as the S-methylcysteine intermediate in catalysis.

The protein belongs to the radical SAM superfamily. RlmN family. Requires [4Fe-4S] cluster as cofactor.

It is found in the cytoplasm. The enzyme catalyses adenosine(2503) in 23S rRNA + 2 reduced [2Fe-2S]-[ferredoxin] + 2 S-adenosyl-L-methionine = 2-methyladenosine(2503) in 23S rRNA + 5'-deoxyadenosine + L-methionine + 2 oxidized [2Fe-2S]-[ferredoxin] + S-adenosyl-L-homocysteine. The catalysed reaction is adenosine(37) in tRNA + 2 reduced [2Fe-2S]-[ferredoxin] + 2 S-adenosyl-L-methionine = 2-methyladenosine(37) in tRNA + 5'-deoxyadenosine + L-methionine + 2 oxidized [2Fe-2S]-[ferredoxin] + S-adenosyl-L-homocysteine. In terms of biological role, specifically methylates position 2 of adenine 2503 in 23S rRNA and position 2 of adenine 37 in tRNAs. m2A2503 modification seems to play a crucial role in the proofreading step occurring at the peptidyl transferase center and thus would serve to optimize ribosomal fidelity. This Paraburkholderia phytofirmans (strain DSM 17436 / LMG 22146 / PsJN) (Burkholderia phytofirmans) protein is Dual-specificity RNA methyltransferase RlmN.